The primary structure comprises 143 residues: AP-4 complex subunit sigma (143 aa).

Belongs to the adaptor complexes small subunit family. In terms of assembly, adaptor protein complex 4 (AP-4) is a heterotetramer composed of two large adaptins (epsilon-type subunit and beta-type subunit), a medium adaptin (mu-type subunit) and a small adaptin (sigma-type subunit). Interacts with EHD2.

Its subcellular location is the golgi apparatus. The protein localises to the trans-Golgi network. The protein resides in the membrane. It localises to the coated pit. Subunit of novel type of clathrin- or non-clathrin-associated protein coat involved in targeting proteins from the trans-Golgi network (TGN) to the endosomal-lysosomal system. This is AP-4 complex subunit sigma from Arabidopsis thaliana (Mouse-ear cress).